A 473-amino-acid chain; its full sequence is UDP-glycosyltransferase 71A27 (473 aa).

Catalysis depends on histidine 15, which acts as the Proton acceptor. Histidine 15 contacts an anthocyanidin. Aspartate 117 serves as the catalytic Charge relay. UDP-alpha-D-glucose contacts are provided by alanine 345, glutamine 347, histidine 362, tryptophan 365, asparagine 366, serine 367, and glutamate 370. Position 385 (glycine 385) interacts with an anthocyanidin. Glutamate 386 and glutamine 387 together coordinate UDP-alpha-D-glucose.

It belongs to the UDP-glycosyltransferase family.

It carries out the reaction (20S)-protopanaxadiol + UDP-alpha-D-glucose = (20S)-ginsenoside C-K + UDP + H(+). It functions in the pathway secondary metabolite biosynthesis; terpenoid biosynthesis. Functionally, component of the triterpene saponins (e.g. PPD-type ginsenosides or panaxosides) biosynthetic pathways. Glycosyltransferase that catalyzes the biosynthesis of compound K from protopanaxadiol (PPD). This chain is UDP-glycosyltransferase 71A27, found in Panax ginseng (Korean ginseng).